The sequence spans 335 residues: Ribosomal RNA large subunit methyltransferase F (335 aa).

It belongs to the methyltransferase superfamily. METTL16/RlmF family.

The protein resides in the cytoplasm. It catalyses the reaction adenosine(1618) in 23S rRNA + S-adenosyl-L-methionine = N(6)-methyladenosine(1618) in 23S rRNA + S-adenosyl-L-homocysteine + H(+). Its function is as follows. Specifically methylates the adenine in position 1618 of 23S rRNA. The chain is Ribosomal RNA large subunit methyltransferase F from Yersinia enterocolitica serotype O:8 / biotype 1B (strain NCTC 13174 / 8081).